We begin with the raw amino-acid sequence, 802 residues long: DNA mismatch repair protein MutS (802 aa).

An ATP-binding site is contributed by 617 to 624; that stretch reads GPNMGGKS.

This sequence belongs to the DNA mismatch repair MutS family.

This protein is involved in the repair of mismatches in DNA. It is possible that it carries out the mismatch recognition step. This protein has a weak ATPase activity. This chain is DNA mismatch repair protein MutS, found in Buchnera aphidicola subsp. Acyrthosiphon pisum (strain Tuc7).